Here is a 191-residue protein sequence, read N- to C-terminus: ATP-dependent dethiobiotin synthetase BioD 2 (191 aa).

13-18 (DVGKTI) contributes to the ATP binding site. Threonine 17 serves as a coordination point for Mg(2+). Residue lysine 38 is part of the active site. Residue threonine 42 participates in substrate binding. ATP contacts are provided by residues aspartate 50 and 115 to 118 (EGAG). The Mg(2+) site is built by aspartate 50 and glutamate 115.

The protein belongs to the dethiobiotin synthetase family. As to quaternary structure, homodimer. Mg(2+) is required as a cofactor.

The protein localises to the cytoplasm. The enzyme catalyses (7R,8S)-7,8-diammoniononanoate + CO2 + ATP = (4R,5S)-dethiobiotin + ADP + phosphate + 3 H(+). It participates in cofactor biosynthesis; biotin biosynthesis; biotin from 7,8-diaminononanoate: step 1/2. Catalyzes a mechanistically unusual reaction, the ATP-dependent insertion of CO2 between the N7 and N8 nitrogen atoms of 7,8-diaminopelargonic acid (DAPA, also called 7,8-diammoniononanoate) to form a ureido ring. The sequence is that of ATP-dependent dethiobiotin synthetase BioD 2 from Haemophilus influenzae (strain ATCC 51907 / DSM 11121 / KW20 / Rd).